The primary structure comprises 508 residues: Rhamnogalacturonan I rhamnosyltransferase 1 (508 aa).

The chain crosses the membrane as a helical; Signal-anchor for type II membrane protein span at residues 41–63 (LWMIRAVTVLLLWSCFVHLMALG). 3 N-linked (GlcNAc...) asparagine glycosylation sites follow: N136, N202, and N223. 277–279 (HLR) serves as a coordination point for substrate. N-linked (GlcNAc...) asparagine glycosylation is present at N391.

Belongs to the glycosyltransferase GT106 family. As to expression, highly expressed in siliques. Expressed in stems and flowers. Expressed at low levels in roots and rosette leaves.

Its subcellular location is the golgi apparatus membrane. The catalysed reaction is alpha-D-galacturonosyl-[(1-&gt;2)-alpha-L-rhamnosyl-(1-&gt;4)-alpha-D-galacturonosyl](n) + UDP-beta-L-rhamnose = [(1-&gt;2)-alpha-L-rhamnosyl-(1-&gt;4)-alpha-D-galacturonosyl](n+1) + UDP + H(+). Its pathway is glycan metabolism; pectin biosynthesis. Its function is as follows. Glycosyltransferase involved in the formation of rhamnogalacturonan I (RG-I) oligosaccharides in the seed coat mucilage, which is a specialized cell wall with abundant RG-I. Transfers the rhamnose residue from UDP-beta-L-rhamnose to RG-I oligosaccharides. Prefers RG-I oligosaccharides with a degree of polymerization of 5 or larger than 5. Does not act on oligosaccharides with a degree of polymerization of 4 or smaller than 4. Does not require metal ions for its activity. This chain is Rhamnogalacturonan I rhamnosyltransferase 1, found in Arabidopsis thaliana (Mouse-ear cress).